Here is a 77-residue protein sequence, read N- to C-terminus: Apidermin 2 (77 aa).

Residues 1 to 16 (MKSLLILFAIVAVVAA) form the signal peptide.

Expressed in the epidermis, hypopharyngeal glands, fat body, trachea, esophagus and stomach.

It is found in the secreted. Functionally, antimicrobial peptide that binds cell wall carbohydrates of microbial symbionts and induces structural damage. Binds the cell wall carbohydrates mannan, N-acetyl-D-glucosamine and lipopolysaccharide. Can target fungi, Gram-negative and Gram-positive bacteria. The chain is Apidermin 2 from Apis mellifera (Honeybee).